The sequence spans 919 residues: MLX-interacting protein (919 aa).

The interval 1–72 (MAADVFMCSP…AGPGREEPPR (72 aa)) is disordered. Ala2 is modified (N-acetylalanine). Ser9, Ser27, Ser33, and Ser39 each carry phosphoserine. Over residues 27–37 (SEDDDDSDTDE) the composition is skewed to acidic residues. The segment covering 44–56 (SGAATPARAHASA) has biased composition (low complexity). The interval 73-327 (RQQIIHSGHF…PLQPNLDFMD (255 aa)) is required for cytoplasmic localization. The tract at residues 322-445 (NLDFMDTFEP…LLSPSPAPPP (124 aa)) is transactivation domain. Disordered regions lie at residues 542–562 (KPVS…PAPK) and 633–712 (DLGH…SDPK). Position 669 is a phosphoserine (Ser669). Positions 670 to 685 (PQVTVTGPSRDCPNSG) are enriched in polar residues. Positions 686–706 (QASPCASEQSPSPQSPQNNCS) are enriched in low complexity. A bHLH domain is found at 719–769 (NRQMKHISAEQKRRFNIKMCFDMLNSLISNNSKLTSHAITLQKTVEYITKL). Positions 769–790 (LQQERGQMQEEARRLREEIEEL) are leucine-zipper. The interval 832–881 (WKFWIFSIIIKPLFESFKGMVSTSSLEELHRTALSWLDQHCSLPILRPMV) is mediates heterotypic interactions between MLXIP and MLX and is required for cytoplasmic localization.

Efficient DNA binding requires dimerization with another bHLH protein. Binds DNA as a homodimer or a heterodimer with MLX. Widely expressed in adult tissues. Most abundant in skeletal muscle.

The protein localises to the cytoplasm. Its subcellular location is the nucleus. It localises to the mitochondrion outer membrane. Functionally, binds DNA as a heterodimer with MLX and activates transcription. Binds to the canonical E box sequence 5'-CACGTG-3'. Plays a role in transcriptional activation of glycolytic target genes. Involved in glucose-responsive gene regulation. This is MLX-interacting protein from Homo sapiens (Human).